We begin with the raw amino-acid sequence, 312 residues long: Glycine--tRNA ligase alpha subunit (312 aa).

Belongs to the class-II aminoacyl-tRNA synthetase family. In terms of assembly, tetramer of two alpha and two beta subunits.

It is found in the cytoplasm. It catalyses the reaction tRNA(Gly) + glycine + ATP = glycyl-tRNA(Gly) + AMP + diphosphate. The polypeptide is Glycine--tRNA ligase alpha subunit (Thiobacillus denitrificans (strain ATCC 25259 / T1)).